The following is a 493-amino-acid chain: Aminotransferase swnA (493 aa).

The protein belongs to the class-I pyridoxal-phosphate-dependent aminotransferase family. Requires pyridoxal 5'-phosphate as cofactor.

It functions in the pathway mycotoxin biosynthesis. Functionally, aminotransferase; part of the gene cluster that mediates the biosynthesis of swainsonine (SW), a cytotoxic fungal alkaloid and a potential cancer therapy drug. Swainsonine production occurs via a multibranched pathway and is dispensable for fungal colonization of plants and infection of insect hosts. The first step of swainsonine biosynthesis is the production of the precursor pipecolic acid (PA) via conversion of L-lysine (Lys) to 1-piperideine-6-carboxylate (P6C) by the aminotransferase swnA, the latter being further reduced to PA by the reductase swnR. The PKS-NRPS hybrid synthetase swnK uptakes and condensates PA and malonyl-CoA with and without skipping of the ketoreductase (KR) domain in order to produce 3 intermediates, 1-oxoindolizidine, (1S)-1-hydroxyindolizin, and (1R)-1-hydroxyindolizine; with the transisomer (1S)-1-hydroxyindolizin being predominant. The terminal thioester reductase (TE) domain of swnK is involved in reduction of the thioester bond to release the intermediate aldehydes. The oxidoreductase swnN could contribute to the reduction of 1-oxoindolizidine to (1S)-1-hydroxyindolizin and (1R)-1-hydroxyindolizine, contributing to the major route of SW production. The dioxygenase swnH2 would be responsible for the oxidization of (1R)-1-hydroxyindolizine into (1R,2S)-1,2-dihydroxyindolizine and of (1S)-1-hydroxyindolizin to yield both (1R,2S)-1,2-dihydroxyindolizine and (1S,2S)-1,2-dihydroxyindolizine. The dioxygenase swnH1 then performs the conversion of the 1,2-dihydroxyindolizine epimers to SW. The protein is Aminotransferase swnA of Arthroderma benhamiae (strain ATCC MYA-4681 / CBS 112371) (Trichophyton mentagrophytes).